Reading from the N-terminus, the 355-residue chain is Uroporphyrinogen decarboxylase (355 aa).

Residues 27–31, aspartate 78, tyrosine 155, threonine 210, and histidine 328 each bind substrate; that span reads RQAGR.

The protein belongs to the uroporphyrinogen decarboxylase family. In terms of assembly, homodimer.

The protein resides in the cytoplasm. The catalysed reaction is uroporphyrinogen III + 4 H(+) = coproporphyrinogen III + 4 CO2. It functions in the pathway porphyrin-containing compound metabolism; protoporphyrin-IX biosynthesis; coproporphyrinogen-III from 5-aminolevulinate: step 4/4. Functionally, catalyzes the decarboxylation of four acetate groups of uroporphyrinogen-III to yield coproporphyrinogen-III. In Pseudomonas fluorescens (strain SBW25), this protein is Uroporphyrinogen decarboxylase.